Reading from the N-terminus, the 168-residue chain is Protein B-Myc (168 aa).

2 disordered regions span residues 26 to 94 (DDEE…DLPE) and 146 to 168 (EGAS…TCNT). Phosphoserine occurs at positions 59 and 67.

Its subcellular location is the nucleus. Functionally, seems to act as an inhibitor of cellular proliferation. This is Protein B-Myc (Mycb) from Rattus norvegicus (Rat).